The primary structure comprises 263 residues: Tryptophan synthase alpha chain (263 aa).

Residues E49 and D60 each act as proton acceptor in the active site.

It belongs to the TrpA family. As to quaternary structure, tetramer of two alpha and two beta chains.

It carries out the reaction (1S,2R)-1-C-(indol-3-yl)glycerol 3-phosphate + L-serine = D-glyceraldehyde 3-phosphate + L-tryptophan + H2O. It participates in amino-acid biosynthesis; L-tryptophan biosynthesis; L-tryptophan from chorismate: step 5/5. Its function is as follows. The alpha subunit is responsible for the aldol cleavage of indoleglycerol phosphate to indole and glyceraldehyde 3-phosphate. This Roseobacter denitrificans (strain ATCC 33942 / OCh 114) (Erythrobacter sp. (strain OCh 114)) protein is Tryptophan synthase alpha chain.